Here is a 645-residue protein sequence, read N- to C-terminus: Chaperone protein DnaK (645 aa).

T201 carries the post-translational modification Phosphothreonine; by autocatalysis. The segment covering 606–629 (NTNNATAGDNNTTDTGSSSNSDGS) has biased composition (low complexity). The tract at residues 606 to 645 (NTNNATAGDNNTTDTGSSSNSDGSKVVDSDYQEIDKKDGK) is disordered. Residues 630-645 (KVVDSDYQEIDKKDGK) show a composition bias toward basic and acidic residues.

This sequence belongs to the heat shock protein 70 family.

In terms of biological role, acts as a chaperone. This Ehrlichia ruminantium (strain Gardel) protein is Chaperone protein DnaK.